The primary structure comprises 271 residues: MDLINTSRLHETNKQFKNKNEATKLHWRTFFNNFGPFTSIIFSMLMYLIFSKNDFNGTPFLRFVGVLFPSLYSSMEYFLLLFDSWRSDHRVLLSLHGVLYLLLNTILFMFSFVTIISTIAFTASKWNDNDDPATFTMAIPSFFVSFAYLLSISCDFSAKSVLSIGMSTNVPIDLLILLIPIIGTILLIEKSRYHFYFFIVPAILIPVRSLKERYFVSGKSSLSVAPWRTMVFVFMLILGVFVYAFLAYGSVEILYQYLCSFNKPPSQLGNE.

It belongs to the UPF0328 family.

In Encephalitozoon cuniculi (strain GB-M1) (Microsporidian parasite), this protein is UPF0328 protein ECU09_0020.